We begin with the raw amino-acid sequence, 689 residues long: Beta-galactosidase Pbg (689 aa).

R118 lines the substrate pocket. C122 is a Zn(2+) binding site. N156 provides a ligand contact to substrate. E157 (proton donor) is an active-site residue. Residues C162, C164, and C167 each coordinate Zn(2+). Residue E318 is the Nucleophile of the active site. Substrate is bound by residues W326 and 366-369 (EKFH).

Belongs to the glycosyl hydrolase 42 family.

The catalysed reaction is Hydrolysis of terminal non-reducing beta-D-galactose residues in beta-D-galactosides.. This Clostridium perfringens (strain ATCC 13124 / DSM 756 / JCM 1290 / NCIMB 6125 / NCTC 8237 / Type A) protein is Beta-galactosidase Pbg.